A 199-amino-acid chain; its full sequence is Riboflavin synthase (199 aa).

2 Lumazine-binding repeats span residues methionine 1–histidine 95 and phenylalanine 96–isoleucine 188. 2,4-dihydroxypteridine contacts are provided by residues glycine 4–isoleucine 6, cysteine 46–threonine 48, aspartate 60–threonine 65, glycine 99–valine 101, lysine 130, serine 139–threonine 141, and serine 153–threonine 158.

In terms of assembly, homotrimer.

The catalysed reaction is 2 6,7-dimethyl-8-(1-D-ribityl)lumazine + H(+) = 5-amino-6-(D-ribitylamino)uracil + riboflavin. It functions in the pathway cofactor biosynthesis; riboflavin biosynthesis; riboflavin from 2-hydroxy-3-oxobutyl phosphate and 5-amino-6-(D-ribitylamino)uracil: step 2/2. Its function is as follows. Catalyzes the dismutation of two molecules of 6,7-dimethyl-8-ribityllumazine, resulting in the formation of riboflavin and 5-amino-6-(D-ribitylamino)uracil. In Chlamydia trachomatis serovar D (strain ATCC VR-885 / DSM 19411 / UW-3/Cx), this protein is Riboflavin synthase (ribE).